A 323-amino-acid chain; its full sequence is Delta(7)-sterol 5(6)-desaturase ERG3B (323 aa).

The next 3 membrane-spanning stretches (helical) occupy residues 67-87, 112-132, and 150-170; these read ASIL…SAAL, IQSS…FFLG, and SWLA…IYWI. Residues 157-285 form the Fatty acid hydroxylase domain; the sequence is ILYMVFNDLG…YFTWADNYWG (129 aa). A Histidine box-1 motif is present at residues 171-175; sequence HRLEH. Positions 184-188 match the Histidine box-2 motif; it reads HKPHH. The Histidine box-3 signature appears at 262–266; the sequence is HTLHH.

Belongs to the sterol desaturase family.

The protein localises to the endoplasmic reticulum membrane. It carries out the reaction episterol + 2 Fe(II)-[cytochrome b5] + O2 + 2 H(+) = 5-dehydroepisterol + 2 Fe(III)-[cytochrome b5] + 2 H2O. It functions in the pathway steroid metabolism; ergosterol biosynthesis. Functionally, C-5 sterol desaturase; part of the third module of ergosterol biosynthesis pathway that includes the late steps of the pathway. ERG3A and ERG3BB catalyze the introduction of a C-5 double bond in the B ring to produce 5-dehydroepisterol. The third module or late pathway involves the ergosterol synthesis itself through consecutive reactions that mainly occur in the endoplasmic reticulum (ER) membrane. Firstly, the squalene synthase ERG9 catalyzes the condensation of 2 farnesyl pyrophosphate moieties to form squalene, which is the precursor of all steroids. Squalene synthase is crucial for balancing the incorporation of farnesyl diphosphate (FPP) into sterol and nonsterol isoprene synthesis. Secondly, squalene is converted into lanosterol by the consecutive action of the squalene epoxidase ERG1 and the lanosterol synthase ERG7. Then, the delta(24)-sterol C-methyltransferase ERG6 methylates lanosterol at C-24 to produce eburicol. Eburicol is the substrate of the sterol 14-alpha demethylase encoded by CYP51A, CYP51B and CYP51C, to yield 4,4,24-trimethyl ergosta-8,14,24(28)-trienol. CYP51B encodes the enzyme primarily responsible for sterol 14-alpha-demethylation, and plays an essential role in ascospore formation. CYP51A encodes an additional sterol 14-alpha-demethylase, induced on ergosterol depletion and responsible for the intrinsic variation in azole sensitivity. The third CYP51 isoform, CYP51C, does not encode a sterol 14-alpha-demethylase, but is required for full virulence on host wheat ears. The C-14 reductase ERG24 then reduces the C14=C15 double bond which leads to 4,4-dimethylfecosterol. A sequence of further demethylations at C-4, involving the C-4 demethylation complex containing the C-4 methylsterol oxidases ERG25, the sterol-4-alpha-carboxylate 3-dehydrogenase ERG26 and the 3-keto-steroid reductase ERG27, leads to the production of fecosterol via 4-methylfecosterol. ERG28 has a role as a scaffold to help anchor ERG25, ERG26 and ERG27 to the endoplasmic reticulum. The C-8 sterol isomerase ERG2 then catalyzes the reaction which results in unsaturation at C-7 in the B ring of sterols and thus converts fecosterol to episterol. The sterol-C5-desaturases ERG3A and ERG3BB then catalyze the introduction of a C-5 double bond in the B ring to produce 5-dehydroepisterol. The C-22 sterol desaturases ERG5A and ERG5B further convert 5-dehydroepisterol into ergosta-5,7,22,24(28)-tetraen-3beta-ol by forming the C-22(23) double bond in the sterol side chain. Finally, ergosta-5,7,22,24(28)-tetraen-3beta-ol is substrate of the C-24(28) sterol reductase ERG4 to produce ergosterol. The protein is Delta(7)-sterol 5(6)-desaturase ERG3B of Gibberella zeae (strain ATCC MYA-4620 / CBS 123657 / FGSC 9075 / NRRL 31084 / PH-1) (Wheat head blight fungus).